The sequence spans 129 residues: Small ribosomal subunit protein uS11 (129 aa).

This sequence belongs to the universal ribosomal protein uS11 family. Part of the 30S ribosomal subunit. Interacts with proteins S7 and S18. Binds to IF-3.

Located on the platform of the 30S subunit, it bridges several disparate RNA helices of the 16S rRNA. Forms part of the Shine-Dalgarno cleft in the 70S ribosome. The protein is Small ribosomal subunit protein uS11 of Azotobacter vinelandii (strain DJ / ATCC BAA-1303).